The primary structure comprises 1544 residues: Arf-GAP with Rho-GAP domain, ANK repeat and PH domain-containing protein 3 (1544 aa).

The SAM domain occupies 4-68 (PQDLDIAVWL…LRLLQTGTEE (65 aa)). Disordered regions lie at residues 64–147 (TGTE…EQSS) and 167–194 (GRAQ…PTTG). Pro residues-rich tracts occupy residues 82-97 (SPSP…PVPK) and 130-139 (EPSPRPPPLP). 2 consecutive PH domains span residues 287–379 (TPLL…SCLK) and 394–483 (RPLR…EAVT). The Arf-GAP domain maps to 480-611 (EAVTETLSDY…LFRKPHPQYP (132 aa)). The C4-type zinc finger occupies 504 to 527 (CADCGSSRPDWAAVNLGVVICKQC). The Rho-GAP domain occupies 907–1088 (TGLQEQQMSR…ELIDGYISVF (182 aa)). The Ras-associating domain maps to 1117–1210 (GDLIMEVYIE…ASLLLKKVPL (94 aa)). Residues 1223-1325 (ESPRVGLLRC…WTTSILKAQH (103 aa)) form the PH 3 domain. Thr-1348 bears the Phosphothreonine mark. A phosphotyrosine mark is found at Tyr-1403 and Tyr-1408. The disordered stretch occupies residues 1422–1544 (STSFSTTREW…SSPPSSQPLT (123 aa)). A compositionally biased stretch (polar residues) spans 1438–1457 (PLTSQKSLDQPFLSKSSTLG). Residues Ser-1444 and Ser-1480 each carry the phosphoserine modification. Low complexity-rich tracts occupy residues 1482–1492 (EEQLLQELSSL) and 1502–1527 (GLGS…TPGF).

In terms of assembly, interacts (via SAM domain) with INPPL1/SHIP2. Tyrosine phosphorylated at a low basal level. PDGF treatment stimulates phosphorylation. Tyrosine phosphorylation is increased in cells that are in the process of becoming attached to a substrate and that start spreading and flattening.

Its subcellular location is the cytoplasm. It is found in the cytoskeleton. The protein localises to the cell membrane. It localises to the cell projection. The protein resides in the lamellipodium. Its subcellular location is the ruffle. Functionally, phosphatidylinositol 3,4,5-trisphosphate-dependent GTPase-activating protein that modulates actin cytoskeleton remodeling by regulating ARF and RHO family members. Is activated by phosphatidylinositol 3,4,5-trisphosphate (PtdIns(3,4,5)P3) binding. Can be activated by phosphatidylinositol 3,4-bisphosphate (PtdIns(3,4,5)P2) binding, albeit with lower efficiency. Acts on ARF6, RAC1, RHOA and CDC42. Plays a role in the internalization of anthrax toxin. This Homo sapiens (Human) protein is Arf-GAP with Rho-GAP domain, ANK repeat and PH domain-containing protein 3 (ARAP3).